Consider the following 199-residue polypeptide: Holliday junction branch migration complex subunit RuvA (199 aa).

Residues 1-63 are domain I; it reads MIGCLIGEVF…EDAQQLYGFS (63 aa). A domain II region spans residues 64–142; the sequence is DAQEKTIFRT…TLAQGTSSAA (79 aa). The tract at residues 143–150 is flexible linker; the sequence is ALPQIQFV. The segment at 150 to 199 is domain III; it reads VSNSPVAEAEAALQSLGYKPLEAQKAVAAVKADYTESADIIRAALKSMMK.

The protein belongs to the RuvA family. As to quaternary structure, homotetramer. Forms an RuvA(8)-RuvB(12)-Holliday junction (HJ) complex. HJ DNA is sandwiched between 2 RuvA tetramers; dsDNA enters through RuvA and exits via RuvB. An RuvB hexamer assembles on each DNA strand where it exits the tetramer. Each RuvB hexamer is contacted by two RuvA subunits (via domain III) on 2 adjacent RuvB subunits; this complex drives branch migration. In the full resolvosome a probable DNA-RuvA(4)-RuvB(12)-RuvC(2) complex forms which resolves the HJ.

Its subcellular location is the cytoplasm. The RuvA-RuvB-RuvC complex processes Holliday junction (HJ) DNA during genetic recombination and DNA repair, while the RuvA-RuvB complex plays an important role in the rescue of blocked DNA replication forks via replication fork reversal (RFR). RuvA specifically binds to HJ cruciform DNA, conferring on it an open structure. The RuvB hexamer acts as an ATP-dependent pump, pulling dsDNA into and through the RuvAB complex. HJ branch migration allows RuvC to scan DNA until it finds its consensus sequence, where it cleaves and resolves the cruciform DNA. The chain is Holliday junction branch migration complex subunit RuvA from Acinetobacter baumannii (strain ACICU).